Reading from the N-terminus, the 620-residue chain is Chaperone protein HscA homolog (620 aa).

The protein belongs to the heat shock protein 70 family.

Chaperone involved in the maturation of iron-sulfur cluster-containing proteins. Has a low intrinsic ATPase activity which is markedly stimulated by HscB. The protein is Chaperone protein HscA homolog of Colwellia psychrerythraea (strain 34H / ATCC BAA-681) (Vibrio psychroerythus).